Reading from the N-terminus, the 833-residue chain is Leucine--tRNA ligase (833 aa).

The short motif at 41 to 52 is the 'HIGH' region element; the sequence is PYPSGAGLHVGH. The short motif at 610–614 is the 'KMSKS' region element; sequence KMSKS. Lysine 613 contacts ATP.

This sequence belongs to the class-I aminoacyl-tRNA synthetase family.

Its subcellular location is the cytoplasm. It catalyses the reaction tRNA(Leu) + L-leucine + ATP = L-leucyl-tRNA(Leu) + AMP + diphosphate. This Streptococcus pyogenes serotype M5 (strain Manfredo) protein is Leucine--tRNA ligase.